Here is a 366-residue protein sequence, read N- to C-terminus: UDP-N-acetylglucosamine--N-acetylmuramyl-(pentapeptide) pyrophosphoryl-undecaprenol N-acetylglucosamine transferase (366 aa).

UDP-N-acetyl-alpha-D-glucosamine-binding positions include 14–16, N125, R168, S196, and Q297; that span reads TGG.

The protein belongs to the glycosyltransferase 28 family. MurG subfamily.

The protein localises to the cell inner membrane. It catalyses the reaction di-trans,octa-cis-undecaprenyl diphospho-N-acetyl-alpha-D-muramoyl-L-alanyl-D-glutamyl-meso-2,6-diaminopimeloyl-D-alanyl-D-alanine + UDP-N-acetyl-alpha-D-glucosamine = di-trans,octa-cis-undecaprenyl diphospho-[N-acetyl-alpha-D-glucosaminyl-(1-&gt;4)]-N-acetyl-alpha-D-muramoyl-L-alanyl-D-glutamyl-meso-2,6-diaminopimeloyl-D-alanyl-D-alanine + UDP + H(+). The protein operates within cell wall biogenesis; peptidoglycan biosynthesis. Its function is as follows. Cell wall formation. Catalyzes the transfer of a GlcNAc subunit on undecaprenyl-pyrophosphoryl-MurNAc-pentapeptide (lipid intermediate I) to form undecaprenyl-pyrophosphoryl-MurNAc-(pentapeptide)GlcNAc (lipid intermediate II). The sequence is that of UDP-N-acetylglucosamine--N-acetylmuramyl-(pentapeptide) pyrophosphoryl-undecaprenol N-acetylglucosamine transferase from Rhodopseudomonas palustris (strain HaA2).